The following is a 128-amino-acid chain: Small ribosomal subunit protein uS9 (128 aa).

This sequence belongs to the universal ribosomal protein uS9 family.

The chain is Small ribosomal subunit protein uS9 from Flavobacterium psychrophilum (strain ATCC 49511 / DSM 21280 / CIP 103535 / JIP02/86).